The following is a 264-amino-acid chain: MKAVVLAVAVLFLTGSQARHFWQRDEPQTSWDRVKDFATMYVDVIQESGKDYVAQLDASTLGKQLNLNLLENWDTLSSAFSKLREQLGHVSQEFWDTFEKDTAWLREEMNKDLEKVKKKVQPFLDSFQEKMQEEVKRYRHKVEPLSLELRDGAHQQLKELQEKLGPLGKDLKDHALVHMDELRSHLRTYTEEMGQILAERLGAIKESTSLAEYQTKASEHLRTFSKKAKPILEDLRQGLLPVAENFKTNIKNTFDQITKHVTTQ.

The signal sequence occupies residues 1-18; it reads MKAVVLAVAVLFLTGSQA. 2 repeat units span residues 67-88 and 89-110. Positions 67–264 are 10 X approximate tandem repeats; it reads LNLLENWDTL…DQITKHVTTQ (198 aa). Met-109 bears the Methionine sulfoxide mark. One copy of the 3; half-length repeat lies at 111-121; the sequence is KDLEKVKKKVQ. A run of 3 repeats spans residues 122-143, 144-165, and 166-187. A 7; truncated repeat occupies 188 to 207; sequence TYTEEMGQILAERLGAIKES. Met-193 is modified (methionine sulfoxide). Repeat 8 spans residues 208–229; sequence TSLAEYQTKASEHLRTFSKKAK. The stretch at 230 to 240 is one 9; half-length repeat; it reads PILEDLRQGLL. Repeat 10 spans residues 241 to 264; that stretch reads PVAENFKTNIKNTFDQITKHVTTQ.

The protein belongs to the apolipoprotein A1/A4/E family. In terms of assembly, homodimer. Interacts with APOA1BP and CLU. Component of a sperm activating protein complex (SPAP), consisting of APOA1, an immunoglobulin heavy chain, an immunoglobulin light chain and albumin. Interacts with NDRG1. Interacts with SCGB3A2. Interacts with NAXE and YJEFN3. Glycosylated. In terms of processing, palmitoylated. Post-translationally, phosphorylation sites are present in the extracellular medium.

The protein localises to the secreted. Functionally, participates in the reverse transport of cholesterol from tissues to the liver for excretion by promoting cholesterol efflux from tissues and by acting as a cofactor for the lecithin cholesterol acyltransferase (LCAT). As part of the SPAP complex, activates spermatozoa motility. The protein is Apolipoprotein A-I (Apoa1) of Fukomys damarensis (Damaraland mole rat).